A 96-amino-acid chain; its full sequence is Small ribosomal subunit protein bS18 (96 aa).

The disordered stretch occupies residues 1-20 (MSHGGKRRSGDGGSEGSSYS).

Belongs to the bacterial ribosomal protein bS18 family. As to quaternary structure, part of the 30S ribosomal subunit. Forms a tight heterodimer with protein bS6.

Its function is as follows. Binds as a heterodimer with protein bS6 to the central domain of the 16S rRNA, where it helps stabilize the platform of the 30S subunit. This is Small ribosomal subunit protein bS18 from Anaplasma phagocytophilum (strain HZ).